Consider the following 122-residue polypeptide: Small ribosomal subunit protein uS13 (122 aa).

The interval 94–122 (SLPVRGQRTKTNARTRKVHVSRSKNSRGK) is disordered.

Belongs to the universal ribosomal protein uS13 family. As to quaternary structure, part of the 30S ribosomal subunit. Forms a loose heterodimer with protein S19. Forms two bridges to the 50S subunit in the 70S ribosome.

Located at the top of the head of the 30S subunit, it contacts several helices of the 16S rRNA. In the 70S ribosome it contacts the 23S rRNA (bridge B1a) and protein L5 of the 50S subunit (bridge B1b), connecting the 2 subunits; these bridges are implicated in subunit movement. Contacts the tRNAs in the A and P-sites. The protein is Small ribosomal subunit protein uS13 of Haemophilus influenzae (strain ATCC 51907 / DSM 11121 / KW20 / Rd).